The sequence spans 220 residues: 7-cyano-7-deazaguanine synthase (220 aa).

7–17 contacts ATP; the sequence is LSGGMDSSITA. Residues cysteine 185, cysteine 193, cysteine 196, and cysteine 199 each coordinate Zn(2+).

It belongs to the QueC family. The cofactor is Zn(2+).

It carries out the reaction 7-carboxy-7-deazaguanine + NH4(+) + ATP = 7-cyano-7-deazaguanine + ADP + phosphate + H2O + H(+). Its pathway is purine metabolism; 7-cyano-7-deazaguanine biosynthesis. In terms of biological role, catalyzes the ATP-dependent conversion of 7-carboxy-7-deazaguanine (CDG) to 7-cyano-7-deazaguanine (preQ(0)). The chain is 7-cyano-7-deazaguanine synthase from Nitratiruptor sp. (strain SB155-2).